The following is a 462-amino-acid chain: Receptor like protein 29 (462 aa).

Positions 1–26 are cleaved as a signal peptide; that stretch reads MTMKRALPSPSSLLFFFLLITPLFLC. Residues 27-441 are Extracellular-facing; sequence QENRVSASMP…SQASRYYRSC (415 aa). Asn-139 carries an N-linked (GlcNAc...) asparagine glycan. LRR repeat units follow at residues 139–164, 165–188, 190–212, 213–236, 238–260, 261–284, 286–308, 309–331, 332–355, and 357–381; these read NSSLQQLSLRSNPSLSGQIPPRISSL, KSLQILTLSQNRLTGDIPPAIFSL, SLVHLDLSYNKLTGKIPLQLGNL, NNLVGLDLSYNSLTGTIPPTISQL, MLQKLDLSSNSLFGRIPEGVEKL, RSLSFMALSNNKLKGAFPKGISNL, SLQYFIMDNNPMFVALPVELGFL, PKLQELQLENSGYSGVIPESYTK, LTNLSSLSLANNRLTGEIPSGFES, and PHVFHLNLSRNLLIGVVPFDSSFLR. N-linked (GlcNAc...) asparagine glycosylation is found at Asn-334, Asn-363, and Asn-416. The helical transmembrane segment at 442 to 462 threads the bilayer; that stretch reads FFANALFPFALFLGLHQRWVL.

The protein belongs to the RLP family.

It localises to the cell membrane. This Arabidopsis thaliana (Mouse-ear cress) protein is Receptor like protein 29.